Here is a 253-residue protein sequence, read N- to C-terminus: Methionine aminopeptidase (253 aa).

A substrate-binding site is contributed by histidine 78. Residues aspartate 95, aspartate 106, and histidine 169 each contribute to the a divalent metal cation site. Histidine 176 is a substrate binding site. Residues glutamate 206 and glutamate 237 each coordinate a divalent metal cation.

It belongs to the peptidase M24A family. Methionine aminopeptidase type 1 subfamily. In terms of assembly, monomer. The cofactor is Co(2+). Zn(2+) is required as a cofactor. Requires Mn(2+) as cofactor. It depends on Fe(2+) as a cofactor.

It carries out the reaction Release of N-terminal amino acids, preferentially methionine, from peptides and arylamides.. Removes the N-terminal methionine from nascent proteins. The N-terminal methionine is often cleaved when the second residue in the primary sequence is small and uncharged (Met-Ala-, Cys, Gly, Pro, Ser, Thr, or Val). Requires deformylation of the N(alpha)-formylated initiator methionine before it can be hydrolyzed. The chain is Methionine aminopeptidase from Helicobacter pylori (strain ATCC 700392 / 26695) (Campylobacter pylori).